The primary structure comprises 41 residues: U-AITX-Bg1a (41 aa).

Cystine bridges form between C2–C35, C4–C28, and C18–C36.

This sequence belongs to the sea anemone type 3 (BDS) potassium channel toxin family.

The protein localises to the secreted. Its subcellular location is the nematocyst. Functionally, potently and selectively inhibits voltage-gated potassium channels Kv11/KCNH/ERG. Acts as a gating-modifier toxin that shifts the voltage-dependence of ERG activation in the positive direction and suppresses its current amplitudes elicited by strong depolarizing pulses that maximally activate the channels. This chain is U-AITX-Bg1a, found in Bunodosoma granuliferum (Red warty sea anemone).